The primary structure comprises 149 residues: Putative pre-16S rRNA nuclease (149 aa).

Belongs to the YqgF nuclease family.

It is found in the cytoplasm. In terms of biological role, could be a nuclease involved in processing of the 5'-end of pre-16S rRNA. This chain is Putative pre-16S rRNA nuclease, found in Burkholderia ambifaria (strain MC40-6).